Reading from the N-terminus, the 118-residue chain is Small ribosomal subunit protein uS13 (118 aa).

The tract at residues 94 to 118 (SLPLRGQRTKTNARTRKGPRKPIRK) is disordered.

This sequence belongs to the universal ribosomal protein uS13 family. As to quaternary structure, part of the 30S ribosomal subunit. Forms a loose heterodimer with protein S19. Forms two bridges to the 50S subunit in the 70S ribosome.

Functionally, located at the top of the head of the 30S subunit, it contacts several helices of the 16S rRNA. In the 70S ribosome it contacts the 23S rRNA (bridge B1a) and protein L5 of the 50S subunit (bridge B1b), connecting the 2 subunits; these bridges are implicated in subunit movement. Contacts the tRNAs in the A and P-sites. This chain is Small ribosomal subunit protein uS13, found in Shewanella sp. (strain W3-18-1).